We begin with the raw amino-acid sequence, 1221 residues long: DNA-directed RNA polymerase subunit beta' (1221 aa).

Zn(2+) is bound by residues C60, C62, C75, and C78. Residues D449, D451, and D453 each coordinate Mg(2+). Residues C821, C896, C903, and C906 each contribute to the Zn(2+) site.

It belongs to the RNA polymerase beta' chain family. As to quaternary structure, the RNAP catalytic core consists of 2 alpha, 1 beta, 1 beta' and 1 omega subunit. When a sigma factor is associated with the core the holoenzyme is formed, which can initiate transcription. Mg(2+) is required as a cofactor. The cofactor is Zn(2+).

The enzyme catalyses RNA(n) + a ribonucleoside 5'-triphosphate = RNA(n+1) + diphosphate. In terms of biological role, DNA-dependent RNA polymerase catalyzes the transcription of DNA into RNA using the four ribonucleoside triphosphates as substrates. The protein is DNA-directed RNA polymerase subunit beta' of Lactobacillus delbrueckii subsp. bulgaricus (strain ATCC BAA-365 / Lb-18).